Consider the following 443-residue polypeptide: Chromosomal replication initiator protein DnaA (443 aa).

The tract at residues 1–73 is domain I, interacts with DnaA modulators; it reads MYGDYRQIWE…YDAASKVTNR (73 aa). Positions 73–106 are domain II; that stretch reads RFIEIKILSEDEEEYREIKESIERENSSESTLLS. The segment at 107-323 is domain III, AAA+ region; sequence TLNPKYTFDT…GALIRIVAFA (217 aa). Residues Gly-151, Gly-153, Lys-154, and Thr-155 each contribute to the ATP site. The interval 324 to 443 is domain IV, binds dsDNA; it reads TLTKSNIDLE…EELKKRIKGY (120 aa).

Belongs to the DnaA family. In terms of assembly, oligomerizes as a right-handed, spiral filament on DNA at oriC.

It is found in the cytoplasm. In terms of biological role, plays an essential role in the initiation and regulation of chromosomal replication. ATP-DnaA binds to the origin of replication (oriC) to initiate formation of the DNA replication initiation complex once per cell cycle. Binds the DnaA box (a 9 base pair repeat at the origin) and separates the double-stranded (ds)DNA. Forms a right-handed helical filament on oriC DNA; dsDNA binds to the exterior of the filament while single-stranded (ss)DNA is stabiized in the filament's interior. The ATP-DnaA-oriC complex binds and stabilizes one strand of the AT-rich DNA unwinding element (DUE), permitting loading of DNA polymerase. After initiation quickly degrades to an ADP-DnaA complex that is not apt for DNA replication. Binds acidic phospholipids. This Caldanaerobacter subterraneus subsp. tengcongensis (strain DSM 15242 / JCM 11007 / NBRC 100824 / MB4) (Thermoanaerobacter tengcongensis) protein is Chromosomal replication initiator protein DnaA.